We begin with the raw amino-acid sequence, 262 residues long: Putative dimethyl sulfoxide reductase iron-sulfur subunit B (262 aa).

4Fe-4S ferredoxin-type domains follow at residues 4–34, 62–93, and 94–123; these read YGLVIDQERCIGCQSCSLTCKQENNVPMGQF, LEMTYQPTACQHCENAPCVKVCPVNATYTRDD, and GIVEIDYDKCMGCRYCMAACPYNARVFNWD. [4Fe-4S] cluster-binding residues include cysteine 13, cysteine 16, cysteine 19, cysteine 23, cysteine 71, cysteine 74, cysteine 79, cysteine 83, cysteine 103, cysteine 106, cysteine 109, cysteine 113, cysteine 147, cysteine 150, cysteine 162, and cysteine 166. Residues 209-262 are disordered; the sequence is NGEMSPGRPWKSKKLESELDDDEAAKAARRRSGSVENGYDVTPHVPAETAGGDD.

Probable multiprotein complex that likely consists of DmsA, DmsB and DmsC. [4Fe-4S] cluster serves as cofactor.

The protein localises to the cell membrane. In terms of biological role, dimethyl sulfoxide (DMSO) reductase catalyzes the reduction of dimethyl sulfoxide (DMSO) to dimethyl sulfide (DMS) during anaerobic respiration; it can also use trimethylamine N-oxide (TMAO) as terminal electron acceptor. Subunit B is proposed to be involved in electron transfer. The protein is Putative dimethyl sulfoxide reductase iron-sulfur subunit B (dmsB) of Halobacterium salinarum (strain ATCC 700922 / JCM 11081 / NRC-1) (Halobacterium halobium).